The primary structure comprises 318 residues: Aspartate carbamoyltransferase catalytic subunit (318 aa).

Carbamoyl phosphate is bound by residues Arg-67 and Thr-68. Lys-95 contributes to the L-aspartate binding site. Residues Arg-117, His-145, and Gln-148 each contribute to the carbamoyl phosphate site. L-aspartate is bound by residues Arg-178 and Arg-236. Residues Gly-277 and Pro-278 each contribute to the carbamoyl phosphate site.

This sequence belongs to the aspartate/ornithine carbamoyltransferase superfamily. ATCase family. As to quaternary structure, heterododecamer (2C3:3R2) of six catalytic PyrB chains organized as two trimers (C3), and six regulatory PyrI chains organized as three dimers (R2).

It catalyses the reaction carbamoyl phosphate + L-aspartate = N-carbamoyl-L-aspartate + phosphate + H(+). It participates in pyrimidine metabolism; UMP biosynthesis via de novo pathway; (S)-dihydroorotate from bicarbonate: step 2/3. Catalyzes the condensation of carbamoyl phosphate and aspartate to form carbamoyl aspartate and inorganic phosphate, the committed step in the de novo pyrimidine nucleotide biosynthesis pathway. In Roseiflexus castenholzii (strain DSM 13941 / HLO8), this protein is Aspartate carbamoyltransferase catalytic subunit.